The chain runs to 405 residues: Pre-mRNA-splicing factor cwc-24 (405 aa).

2 disordered regions span residues 1–114 and 162–184; these read MADT…NTIY and TKKK…DGTY. The span at 15 to 29 shows a compositional bias: low complexity; it reads EPTTATPTAPIAPVA. Positions 31 to 46 are enriched in basic residues; the sequence is FKKRGAKGKANLRKRP. Acidic residues predominate over residues 56–70; that stretch reads SDDDSSDFESSEDEA. Positions 74-83 are enriched in basic residues; it reads RIKRRKKNHH. A C3H1-type zinc finger spans residues 221–249; it reads DMAPDVCKDYKQTGFCGFGDNCKFLHARE. The RING-type zinc finger occupies 310 to 349; the sequence is CIICRGPYSNSPVVTRCGHYFCEACALKRYRKDPSCAACG. Positions 370-386 are enriched in basic and acidic residues; sequence KARAERLRREARERGEE. The tract at residues 370–405 is disordered; the sequence is KARAERLRREARERGEEVSEEEDEGEDEGEGAEGSD. A compositionally biased stretch (acidic residues) spans 387 to 405; the sequence is VSEEEDEGEDEGEGAEGSD.

It belongs to the CWC24 family. Associated with the spliceosome.

It is found in the nucleus. Functionally, involved in pre-mRNA splicing. This chain is Pre-mRNA-splicing factor cwc-24 (cwc-24), found in Neurospora crassa (strain ATCC 24698 / 74-OR23-1A / CBS 708.71 / DSM 1257 / FGSC 987).